Consider the following 326-residue polypeptide: tRNA-modifying protein YgfZ (326 aa).

Residues Trp27 and Trp189 each coordinate folate.

It belongs to the tRNA-modifying YgfZ family.

It localises to the cytoplasm. Folate-binding protein involved in regulating the level of ATP-DnaA and in the modification of some tRNAs. It is probably a key factor in regulatory networks that act via tRNA modification, such as initiation of chromosomal replication. This is tRNA-modifying protein YgfZ from Escherichia coli (strain SE11).